Reading from the N-terminus, the 355-residue chain is Peptide chain release factor 1 (355 aa).

An N5-methylglutamine modification is found at Gln-233. Positions 282-293 are enriched in basic and acidic residues; sequence RKKEQARADSRR. The disordered stretch occupies residues 282 to 305; that stretch reads RKKEQARADSRRGQVGSGDRSERI.

Belongs to the prokaryotic/mitochondrial release factor family. Methylated by PrmC. Methylation increases the termination efficiency of RF1.

The protein resides in the cytoplasm. In terms of biological role, peptide chain release factor 1 directs the termination of translation in response to the peptide chain termination codons UAG and UAA. The sequence is that of Peptide chain release factor 1 from Rickettsia rickettsii (strain Iowa).